Consider the following 123-residue polypeptide: Large ribosomal subunit protein uL18 (123 aa).

It belongs to the universal ribosomal protein uL18 family. Part of the 50S ribosomal subunit; part of the 5S rRNA/L5/L18/L25 subcomplex. Contacts the 5S and 23S rRNAs.

This is one of the proteins that bind and probably mediate the attachment of the 5S RNA into the large ribosomal subunit, where it forms part of the central protuberance. This chain is Large ribosomal subunit protein uL18, found in Protochlamydia amoebophila (strain UWE25).